Consider the following 457-residue polypeptide: MNQQLSWRTIVGYSLGDVANNFAFAMGALFLLSYYTDVAGVGAAAAGTMLLLVRVFDAFADVFAGRVVDSVNTRWGKFRPFLLFGTAPLMIFSVLVFWVLTDWSHGSKVVYAYLTYMGLGLCYSLVNIPYGSLATAMTQQPQSRARLGAARGIAASLTFVCLAFLIGPSIKNSSPEEMVSVYHFWTIVLAIAGMVLYFICFKSTRENVVRIVAQPSLNISLQTLKRNRPLFMLCIGALCVLISTFAVSASSLFYVRYVLNDTGLFTVLVLVQNLVGTVASAPLVPGMVARIGKKNTFLIGALLGTCGYLLFFWVSVWSLPVALVALAIASIGQGVTMTVMWALEADTVEYGEYLTGVRIEGLTYSLFSFTRKCGQAIGGSIPAFILGLSGYIANQVQTPEVIMGIRTSIALVPCGFMLLAFVIIWFYPLTDKKFKEIVVEIDNRKKVQQQLISDITN.

At 1–11 (MNQQLSWRTIV) the chain is on the cytoplasmic side. A helical membrane pass occupies residues 12–34 (GYSLGDVANNFAFAMGALFLLSY). Residues 35 to 37 (YTD) are Periplasmic-facing. Residues 38-60 (VAGVGAAAAGTMLLLVRVFDAFA) traverse the membrane as a helical segment. Residues 61–79 (DVFAGRVVDSVNTRWGKFR) lie on the Cytoplasmic side of the membrane. Residues 80–100 (PFLLFGTAPLMIFSVLVFWVL) form a helical membrane-spanning segment. Residues 101–108 (TDWSHGSK) are Periplasmic-facing. A helical membrane pass occupies residues 109-129 (VVYAYLTYMGLGLCYSLVNIP). Topologically, residues 130–146 (YGSLATAMTQQPQSRAR) are cytoplasmic. Residues 147-167 (LGAARGIAASLTFVCLAFLIG) form a helical membrane-spanning segment. The Periplasmic portion of the chain corresponds to 168–180 (PSIKNSSPEEMVS). Residues 181–201 (VYHFWTIVLAIAGMVLYFICF) traverse the membrane as a helical segment. Topologically, residues 202-228 (KSTRENVVRIVAQPSLNISLQTLKRNR) are cytoplasmic. Residues 229 to 249 (PLFMLCIGALCVLISTFAVSA) traverse the membrane as a helical segment. Topologically, residues 250–263 (SSLFYVRYVLNDTG) are periplasmic. The chain crosses the membrane as a helical span at residues 264–284 (LFTVLVLVQNLVGTVASAPLV). At 285-296 (PGMVARIGKKNT) the chain is on the cytoplasmic side. The helical transmembrane segment at 297–316 (FLIGALLGTCGYLLFFWVSV) threads the bilayer. At 317 to 320 (WSLP) the chain is on the periplasmic side. The chain crosses the membrane as a helical span at residues 321-343 (VALVALAIASIGQGVTMTVMWAL). The Cytoplasmic portion of the chain corresponds to 344 to 372 (EADTVEYGEYLTGVRIEGLTYSLFSFTRK). The helical transmembrane segment at 373 to 393 (CGQAIGGSIPAFILGLSGYIA) threads the bilayer. The Periplasmic portion of the chain corresponds to 394-408 (NQVQTPEVIMGIRTS). A helical membrane pass occupies residues 409-429 (IALVPCGFMLLAFVIIWFYPL). The Cytoplasmic portion of the chain corresponds to 430–457 (TDKKFKEIVVEIDNRKKVQQQLISDITN).

It belongs to the sodium:galactoside symporter (TC 2.A.2) family.

It localises to the cell inner membrane. This Escherichia coli (strain K12) protein is Glucuronide carrier protein homolog (uidB).